Here is a 256-residue protein sequence, read N- to C-terminus: 1-(5-phosphoribosyl)-5-[(5-phosphoribosylamino)methylideneamino] imidazole-4-carboxamide isomerase (256 aa).

Asp-8 (proton acceptor) is an active-site residue. Residue Asp-129 is the Proton donor of the active site.

Belongs to the HisA/HisF family.

The protein resides in the cytoplasm. It carries out the reaction 1-(5-phospho-beta-D-ribosyl)-5-[(5-phospho-beta-D-ribosylamino)methylideneamino]imidazole-4-carboxamide = 5-[(5-phospho-1-deoxy-D-ribulos-1-ylimino)methylamino]-1-(5-phospho-beta-D-ribosyl)imidazole-4-carboxamide. Its pathway is amino-acid biosynthesis; L-histidine biosynthesis; L-histidine from 5-phospho-alpha-D-ribose 1-diphosphate: step 4/9. This chain is 1-(5-phosphoribosyl)-5-[(5-phosphoribosylamino)methylideneamino] imidazole-4-carboxamide isomerase, found in Prochlorococcus marinus (strain NATL1A).